Reading from the N-terminus, the 208-residue chain is T-cell surface glycoprotein CD8 beta chain (208 aa).

Positions M1–A21 are cleaved as a signal peptide. One can recognise an Ig-like V-type domain in the interval L22–L131. Topologically, residues L22–L168 are extracellular. Residues N34, N88, and N94 are each glycosylated (N-linked (GlcNAc...) asparagine). C41 and C115 are joined by a disulfide. A helical membrane pass occupies residues I169 to I189. The Cytoplasmic segment spans residues H190–K208.

In terms of assembly, forms disulfide-linked heterodimers with CD8A at the cell surface. Interacts with CD3D; this interaction couples TCR-CD3 with CD8. Interacts with LCK. Post-translationally, phosphorylated as a consequence of T-cell activation. In terms of processing, palmitoylated at the cytoplasmic tail and thereby targets the heterodimer CD8A/CD8B to lipid rafts unlike CD8A homodimers.

Its subcellular location is the cell membrane. In terms of biological role, integral membrane glycoprotein that plays an essential role in the immune response and serves multiple functions in responses against both external and internal offenses. In T-cells, functions primarily as a coreceptor for MHC class I molecule:peptide complex. The antigens presented by class I peptides are derived from cytosolic proteins while class II derived from extracellular proteins. Interacts simultaneously with the T-cell receptor (TCR) and the MHC class I proteins presented by antigen presenting cells (APCs). In turn, recruits the Src kinase LCK to the vicinity of the TCR-CD3 complex. A palmitoylation site in the cytoplasmic tail of CD8B chain contributes to partitioning of CD8 into the plasma membrane lipid rafts where signaling proteins are enriched. Once LCK recruited, it initiates different intracellular signaling pathways by phosphorylating various substrates ultimately leading to lymphokine production, motility, adhesion and activation of cytotoxic T-lymphocytes (CTLs). Additionally, plays a critical role in thymic selection of CD8+ T-cells. The chain is T-cell surface glycoprotein CD8 beta chain (Cd8b) from Rattus norvegicus (Rat).